The sequence spans 856 residues: MSDNDKPKLGMRAPLGLKRTVETGQVKQSFSHGRSNTVVVEVKRRRIVPGRPGEAEPQVTEETAAAPVAPAPAPAPAAQAPVAPRPAPAPIPTGRPMTPLERREQQERLLREAEEARMAALEETRRREERAKAEATEEERRRAEENRRAEEEAERAAAAAAAAATAEAETAAAAPREEAPAAAGTAEEAPRTSSSTMPPPRRFTPVPSPKRPEPPRPQQRDRKGDDRRQSGKLTVTRALDDDSGARARSLAALKRAREKDKRAHQAGTVQQKQVRDVAVPETITVGELANRMAERGADLVKALFKMGMPVTVNQSIDQDTAELLVTEFGHNIKRVSDSDVDLITSDDVDAAETLQPRPPVVTIMGHVDHGKTSLLDALRGTDVASGEAGGITQHIGAYQVQVKSGAKITFLDTPGHEAFSEMRARGANITDIVVIVVAGDDGLRPQTIEAISHTRAAGVPMIIAINKMDKPGSNAQRVREALLQHDVQVESMGGDVQEVEVSALKKTGLDELIEKIELQAELLELKANPDRPAEGTVVEATLDKGRGAVATILVGRGTLKVGDIFVVGAESGKVRALIDDKGRNIKEAGPSLPVEILGLSGVPSAGDQLSVVENEARAREVAAYRAGVIHQKRTTAAPASLESMFSALREQKAQQYPVVVKADAQGSVEAIVGSLNKISTDLIQVRILHAGVGGITESDVSLAAASKAPIIGFNVRANAKAREIATRDGVALKYYDVIYDLLDEIRAAMAGQLGPEYLEHVVGRAEIREVFSAGKHGKAAGLLVLEGYIRQKLRARIMRDDVIIYNGSISSLRRFKDDVPEVRAGLECGITLEATTDIKPGDIVETFEVEERERTL.

Disordered regions lie at residues 1 to 248 and 254 to 273; these read MSDN…ARAR and KRAREKDKRAHQAGTVQQKQ. Residues 22-38 show a composition bias toward polar residues; sequence ETGQVKQSFSHGRSNTV. Over residues 83 to 93 the composition is skewed to pro residues; it reads APRPAPAPIPT. Positions 100 to 150 are enriched in basic and acidic residues; it reads LERREQQERLLREAEEARMAALEETRRREERAKAEATEEERRRAEENRRAE. A compositionally biased stretch (low complexity) spans 156–196; it reads AAAAAAAAATAEAETAAAAPREEAPAAAGTAEEAPRTSSST. Positions 197–209 are enriched in pro residues; sequence MPPPRRFTPVPSP. The segment covering 210–229 has biased composition (basic and acidic residues); that stretch reads KRPEPPRPQQRDRKGDDRRQ. One can recognise a tr-type G domain in the interval 356-526; it reads PRPPVVTIMG…ELQAELLELK (171 aa). Residues 365 to 372 are G1; the sequence is GHVDHGKT. Residue 365–372 participates in GTP binding; sequence GHVDHGKT. The interval 390-394 is G2; the sequence is GITQH. Residues 412–415 form a G3 region; that stretch reads DTPG. Residues 412-416 and 466-469 each bind GTP; these read DTPGH and NKMD. The interval 466-469 is G4; sequence NKMD. The tract at residues 502-504 is G5; it reads SAL.

It belongs to the TRAFAC class translation factor GTPase superfamily. Classic translation factor GTPase family. IF-2 subfamily.

It is found in the cytoplasm. Its function is as follows. One of the essential components for the initiation of protein synthesis. Protects formylmethionyl-tRNA from spontaneous hydrolysis and promotes its binding to the 30S ribosomal subunits. Also involved in the hydrolysis of GTP during the formation of the 70S ribosomal complex. The sequence is that of Translation initiation factor IF-2 from Rhizorhabdus wittichii (strain DSM 6014 / CCUG 31198 / JCM 15750 / NBRC 105917 / EY 4224 / RW1) (Sphingomonas wittichii).